The sequence spans 180 residues: Shikimate kinase (180 aa).

14 to 19 is an ATP binding site; sequence GAGKSC. Serine 18 serves as a coordination point for Mg(2+). Substrate contacts are provided by aspartate 36, arginine 60, and glycine 82. Arginine 120 contacts ATP. Arginine 139 contacts substrate.

Belongs to the shikimate kinase family. Monomer. Mg(2+) is required as a cofactor.

The protein localises to the cytoplasm. The enzyme catalyses shikimate + ATP = 3-phosphoshikimate + ADP + H(+). Its pathway is metabolic intermediate biosynthesis; chorismate biosynthesis; chorismate from D-erythrose 4-phosphate and phosphoenolpyruvate: step 5/7. In terms of biological role, catalyzes the specific phosphorylation of the 3-hydroxyl group of shikimic acid using ATP as a cosubstrate. The chain is Shikimate kinase from Xanthomonas campestris pv. campestris (strain 8004).